Here is a 258-residue protein sequence, read N- to C-terminus: Triosephosphate isomerase (258 aa).

A substrate-binding site is contributed by 9 to 11 (NWK). H95 serves as the catalytic Electrophile. E167 (proton acceptor) is an active-site residue. Positions 173 and 212 each coordinate substrate.

The protein belongs to the triosephosphate isomerase family. In terms of assembly, homodimer.

It is found in the cytoplasm. The catalysed reaction is D-glyceraldehyde 3-phosphate = dihydroxyacetone phosphate. Its pathway is carbohydrate biosynthesis; gluconeogenesis. The protein operates within carbohydrate degradation; glycolysis; D-glyceraldehyde 3-phosphate from glycerone phosphate: step 1/1. Functionally, involved in the gluconeogenesis. Catalyzes stereospecifically the conversion of dihydroxyacetone phosphate (DHAP) to D-glyceraldehyde-3-phosphate (G3P). This is Triosephosphate isomerase from Blochmanniella pennsylvanica (strain BPEN).